Consider the following 128-residue polypeptide: Small ribosomal subunit protein uS12 (128 aa).

The disordered stretch occupies residues 1–24; sequence MPTFNQLVKYGREKRKKKSKAPAL. 3-methylthioaspartic acid is present on Asp-89. The interval 105–128 is disordered; sequence AGVEGRRQSRSKYGTKRPKEEKGG.

It belongs to the universal ribosomal protein uS12 family. As to quaternary structure, part of the 30S ribosomal subunit. Contacts proteins S8 and S17. May interact with IF1 in the 30S initiation complex.

Functionally, with S4 and S5 plays an important role in translational accuracy. In terms of biological role, interacts with and stabilizes bases of the 16S rRNA that are involved in tRNA selection in the A site and with the mRNA backbone. Located at the interface of the 30S and 50S subunits, it traverses the body of the 30S subunit contacting proteins on the other side and probably holding the rRNA structure together. The combined cluster of proteins S8, S12 and S17 appears to hold together the shoulder and platform of the 30S subunit. This chain is Small ribosomal subunit protein uS12, found in Aquifex aeolicus (strain VF5).